Here is a 335-residue protein sequence, read N- to C-terminus: tRNA N6-adenosine threonylcarbamoyltransferase (335 aa).

2 residues coordinate Fe cation: His-107 and His-111. Substrate-binding positions include 129–133 (LVSGG), Asp-162, Gly-175, and Asn-268. A Fe cation-binding site is contributed by Asp-296.

It belongs to the KAE1 / TsaD family. Fe(2+) is required as a cofactor.

It is found in the cytoplasm. It carries out the reaction L-threonylcarbamoyladenylate + adenosine(37) in tRNA = N(6)-L-threonylcarbamoyladenosine(37) in tRNA + AMP + H(+). Required for the formation of a threonylcarbamoyl group on adenosine at position 37 (t(6)A37) in tRNAs that read codons beginning with adenine. Is involved in the transfer of the threonylcarbamoyl moiety of threonylcarbamoyl-AMP (TC-AMP) to the N6 group of A37, together with TsaE and TsaB. TsaD likely plays a direct catalytic role in this reaction. The protein is tRNA N6-adenosine threonylcarbamoyltransferase of Campylobacter fetus subsp. fetus (strain 82-40).